Consider the following 207-residue polypeptide: Large ribosomal subunit protein uL4 (207 aa).

Residues Lys-48–Gly-70 form a disordered region.

It belongs to the universal ribosomal protein uL4 family. Part of the 50S ribosomal subunit.

Its function is as follows. One of the primary rRNA binding proteins, this protein initially binds near the 5'-end of the 23S rRNA. It is important during the early stages of 50S assembly. It makes multiple contacts with different domains of the 23S rRNA in the assembled 50S subunit and ribosome. In terms of biological role, forms part of the polypeptide exit tunnel. This is Large ribosomal subunit protein uL4 from Francisella philomiragia subsp. philomiragia (strain ATCC 25017 / CCUG 19701 / FSC 153 / O#319-036).